The sequence spans 494 residues: Protein transport protein Sec61 subunit alpha (494 aa).

Transmembrane regions (helical) follow at residues 36-56 (LWTSIVVFLYLVCCQIPLYGI), 79-99 (LMELGISPIVTSGLVMQLLAG), 122-142 (LLGILITIGESVAYVLSGMYG), 147-167 (LGAGNAILIIVQLFTSGIIVI), 177-197 (YGIGSAISLFIATNVCESIVW), 249-269 (LLATVLVFVLVVYFQGFQVEL), 294-314 (MPIILQTALVSNLYFISQILY), 359-379 (IVSDPVHALLYIIFILASCAL), 426-446 (AAFGGMCIGALSIVADFMGAI), and 450-470 (TGILLAVTTIYQSWETILLAV).

Belongs to the SecY/SEC61-alpha family. Heterotrimeric complex composed of SEC61-alpha, SEC61-beta and SEC61-gamma.

It localises to the endoplasmic reticulum membrane. Functionally, appears to play a crucial role in the insertion of secretory and membrane polypeptides into the ER. It is required for assembly of membrane and secretory proteins. This is Protein transport protein Sec61 subunit alpha from Pyrenomonas salina.